Consider the following 255-residue polypeptide: F-box only protein 44 (255 aa).

The F-box domain maps to 3–50; it reads VGNINELPENILLELFTHVPARQLLLNCRLVCSLWRDLIDLVTLWKRK. The region spanning 71-252 is the FBA domain; it reads FYFLRSLHRN…VTNSSITIGP (182 aa).

As to quaternary structure, part of a SCF (SKP1-cullin-F-box) protein ligase complex. Interacts with SKP1 and CUL1. In terms of tissue distribution, abundantly expressed in brain and kidney. Expressed at lower levels in heart, spleen and liver.

Its function is as follows. Substrate-recognition component of the SCF (SKP1-CUL1-F-box protein)-type E3 ubiquitin ligase complex. This is F-box only protein 44 (FBXO44) from Homo sapiens (Human).